The sequence spans 681 residues: Sodium/glucose cotransporter 4 (681 aa).

At 1–36 (MSKELAAMGPGASGDGVRTETAPHIALDSRVGLHAY) the chain is on the extracellular side. The helical transmembrane segment at 37–57 (DISVVVIYFVFVIAVGIWSSI) threads the bilayer. Residues 58 to 75 (RASRGTIGGYFLAGRSMS) lie on the Cytoplasmic side of the membrane. The chain crosses the membrane as a helical span at residues 76–98 (WWPIGASLMSSNVGSGLFIGLAG). Residues 99–114 (TGAAGGLAVGGFEWNA) lie on the Extracellular side of the membrane. A helical membrane pass occupies residues 115–135 (TWLLLALGWVFVPVYIAAGVV). Residues 136 to 157 (TMPQYLKKRFGGQRIQVYMSVL) are Cytoplasmic-facing. The helical transmembrane segment at 158-178 (SLILYIFTKISTDIFSGALFI) threads the bilayer. Residues 179 to 190 (QMALGWNLYLST) lie on the Extracellular side of the membrane. The chain crosses the membrane as a helical span at residues 191 to 211 (GILLVVTAVYTIAGGLMAVIY). At 212–217 (TDALQT) the chain is on the cytoplasmic side. The chain crosses the membrane as a helical span at residues 218 to 238 (VIMVGGALVLMFLGFQDVGWY). Residues 239–275 (PGLEQRYRQAIPNVTVPNTTCHLPRPDAFHILRDPVS) lie on the Extracellular side of the membrane. An N-linked (GlcNAc...) asparagine glycan is attached at Asn251. A helical transmembrane segment spans residues 276-296 (GDIPWPGLIFGLTVLATWCWC). Over 297–317 (TDQVIVQRSLSAKSLSHAKGG) the chain is Cytoplasmic. The chain crosses the membrane as a helical span at residues 318-338 (SVLGGYLKILPMFFIVMPGMI). At 339 to 383 (SRALFPDEVGCVDPDVCQRICGARVGCSNIAYPKLVMALMPVGLR) the chain is on the extracellular side. The chain crosses the membrane as a helical span at residues 384–406 (GLMIAVIMAALMSSLTSIFNSSS). At 407-427 (TLFTIDVWQRFRRKSTEQELM) the chain is on the cytoplasmic side. Residues 428–448 (VVGRVFVVFLVVISILWIPII) form a helical membrane-spanning segment. The Extracellular segment spans residues 449–459 (QSSNSGQLFDY). The helical transmembrane segment at 460–480 (IQAVTSYLAPPITALFLLAIF) threads the bilayer. The Cytoplasmic portion of the chain corresponds to 481 to 487 (CKRVTEP). A helical transmembrane segment spans residues 488–508 (GAFWGLVFGLGVGLLRMILEF). At 509–530 (SYPAPACGEVDRRPAVLKDFHY) the chain is on the extracellular side. A helical transmembrane segment spans residues 531-551 (LYFAILLCGLTAIVIVIVSLC). The Cytoplasmic segment spans residues 552 to 660 (TTPIPEEQLT…SIEEEPLWRH (109 aa)). The segment covering 579–591 (AHESTPEISERPA) has biased composition (basic and acidic residues). The interval 579–614 (AHESTPEISERPAGECPAGGGAAENSSLGQEQPEAP) is disordered. Phosphoserine occurs at positions 604 and 605. Residues 661–681 (VCNINAVLLLAINIFLWGYFA) form a helical membrane-spanning segment.

The protein belongs to the sodium:solute symporter (SSF) (TC 2.A.21) family. In terms of tissue distribution, expressed in the small intestine, kidney and liver.

It is found in the cell membrane. It carries out the reaction D-mannose(out) + n Na(+)(out) = D-mannose(in) + n Na(+)(in). In terms of biological role, electrogenic Na(+)-coupled sugar symporter that may play a primary role in D-mannose and possibly D-fructose and D-glucose transport at the plasma membrane. Transporter activity is driven by a transmembrane Na(+) electrochemical gradient set by the Na(+)/K(+) pump. Exclusively recognizes sugar substrates having a pyranose ring with an axial hydroxyl group on carbon 2. This Homo sapiens (Human) protein is Sodium/glucose cotransporter 4.